The primary structure comprises 336 residues: Biotin synthase (336 aa).

Residues 54–281 (NAIQLSTLLS…KAMVRLSAGR (228 aa)) enclose the Radical SAM core domain. [4Fe-4S] cluster-binding residues include C69, C73, and C76. 4 residues coordinate [2Fe-2S] cluster: C113, C144, C204, and R276.

This sequence belongs to the radical SAM superfamily. Biotin synthase family. In terms of assembly, homodimer. [4Fe-4S] cluster is required as a cofactor. [2Fe-2S] cluster serves as cofactor.

It carries out the reaction (4R,5S)-dethiobiotin + (sulfur carrier)-SH + 2 reduced [2Fe-2S]-[ferredoxin] + 2 S-adenosyl-L-methionine = (sulfur carrier)-H + biotin + 2 5'-deoxyadenosine + 2 L-methionine + 2 oxidized [2Fe-2S]-[ferredoxin]. It participates in cofactor biosynthesis; biotin biosynthesis; biotin from 7,8-diaminononanoate: step 2/2. Functionally, catalyzes the conversion of dethiobiotin (DTB) to biotin by the insertion of a sulfur atom into dethiobiotin via a radical-based mechanism. In Burkholderia thailandensis (strain ATCC 700388 / DSM 13276 / CCUG 48851 / CIP 106301 / E264), this protein is Biotin synthase.